We begin with the raw amino-acid sequence, 276 residues long: 4-chlorobenzoyl coenzyme A dehalogenase-2 (276 aa).

66–71 contributes to the substrate binding site; that stretch reads AGFDLE. H93 (proton acceptor) is an active-site residue. G117 lines the substrate pocket. The Nucleophile role is filled by D148. R261 is a substrate binding site.

The protein belongs to the enoyl-CoA hydratase/isomerase family. As to quaternary structure, homotetramer.

It carries out the reaction 4-chlorobenzoyl-CoA + H2O = 4-hydroxybenzoyl-CoA + chloride + H(+). Its pathway is xenobiotic degradation; 4-chlorobenzoate degradation; 4-hydroxybenzoate from 4-chlorobenzoate: step 2/3. Functionally, dehalogenates 4-chlorobenzoyl-CoA, 4-iodobenzoyl-CoA, 4-bromobenzoyl-CoA and, at a slower rate, 4-fluorobenzoyl-CoA. Does not dehalogenate 2-chlorobenzoyl-CoA or 3-chlorobenzoyl-CoA. The sequence is that of 4-chlorobenzoyl coenzyme A dehalogenase-2 from Arthrobacter sp.